A 745-amino-acid chain; its full sequence is MERPPGLRPGAGGPWEMRERLGTGGFGNVCLYQHRELDLKIAIKSCRLELSTKNRERWCHEIQIMKKLNHANVVKACDVPEELNILIHDVPLLAMEYCSGGDLRKLLNKPENCCGLKESQILSLLSDIGSGIRYLHENKIIHRDLKPENIVLQDVGGKIIHKIIDLGYAKDVDQGSLCTSFVGTLQYLAPELFENKPYTATVDYWSFGTMVFECIAGYRPFLHHLQPFTWHEKIKKKDPKCIFACEEMSGEVRFSSHLPQPNSLCSLVVEPMENWLQLMLNWDPQQRGGPVDLTLKQPRCFVLMDHILNLKIVHILNMTSAKIISFLLPPDESLHSLQSRIERETGINTGSQELLSETGISLDPRKPASQCVLDGVRGCDSYMVYLFDKSKTVYEGPFASRSLSDCVNYIVQDSKIQLPIIQLRKVWAEAVHYVSGLKEDYSRLFQGQRAAMLSLLRYNANLTKMKNTLISASQQLKAKLEFFHKSIQLDLERYSEQMTYGISSEKMLKAWKEMEEKAIHYAEVGVIGYLEDQIMSLHAEIMELQKSPYGRRQGDLMESLEQRAIDLYKQLKHRPSDHSYSDSTEMVKIIVHTVQSQDRVLKELFGHLSKLLGCKQKIIDLLPKVEVALSNIKEADNTVMFMQGKRQKEIWHLLKIACTQSSARSLVGSSLEGAVTPQTSAWLPPTSAEHDHSLSCVVTPQDGETSAQMIEENLNCLGHLSTIIHEANEEQGNSMMNLDWSWLTE.

The Protein kinase domain maps to 15–302 (WEMRERLGTG…LTLKQPRCFV (288 aa)). Residues 21–29 (LGTGGFGNV) and lysine 44 contribute to the ATP site. The residue at position 23 (threonine 23) is a Phosphothreonine; by PKB/AKT1 and SGK1. Aspartate 144 serves as the catalytic Proton acceptor. Residue serine 176 is modified to Phosphoserine; by MAP3K14. The residue at position 179 (threonine 179) is a (Microbial infection) O-acetylthreonine; by Yersinia YopJ. A Phosphoserine; by SGK1 modification is found at serine 180. The leucine-zipper stretch occupies residues 455–476 (LLRYNANLTKMKNTLISASQQL). Positions 738–743 (LDWSWL) are NEMO-binding.

It belongs to the protein kinase superfamily. Ser/Thr protein kinase family. I-kappa-B kinase subfamily. As to quaternary structure, component of the I-kappa-B-kinase (IKK) core complex consisting of CHUK, IKBKB and IKBKG; probably four alpha/CHUK-beta/IKBKB dimers are associated with four gamma/IKBKG subunits. The IKK core complex seems to associate with regulatory or adapter proteins to form a IKK-signalosome holo-complex. The IKK complex associates with TERF2IP/RAP1, leading to promote IKK-mediated phosphorylation of RELA/p65. Part of a complex composed of NCOA2, NCOA3, CHUK/IKKA, IKBKB, IKBKG and CREBBP. Part of a 70-90 kDa complex at least consisting of CHUK/IKKA, IKBKB, NFKBIA, RELA, ELP1 and MAP3K14. Directly interacts with TRPC4AP. May interact with TRAF2. Interacts with NALP2. May interact with MAVS/IPS1. Interacts with ARRB1 and ARRB2. Interacts with NLRC5; prevents CHUK phosphorylation and kinase activity. Interacts with PIAS1; this interaction induces PIAS1 phosphorylation. Interacts with ZNF268 isoform 2; the interaction is further increased in a TNF-alpha-dependent manner. Interacts with FOXO3. Interacts with IFIT5; the interaction synergizes the recruitment of IKK to MAP3K7 and enhances IKK phosphorylation. Interacts with LRRC14. Interacts with SASH1. Directly interacts with DDX3X after the physiological activation of the TLR7 and TLR8 pathways; this interaction enhances CHUK autophosphorylation. In terms of assembly, (Microbial infection) Interacts with InlC of Listeria monocytogenes. Post-translationally, phosphorylated by MAP3K14/NIK, AKT and to a lesser extent by MEKK1, and dephosphorylated by PP2A. Autophosphorylated. Ubiquitinated by TRIM56 via 'Lys-63'-linked ubiquitination, promoting activation of CHUK/IKKA. In terms of processing, (Microbial infection) Acetylation of Thr-179 by Yersinia YopJ prevents phosphorylation and activation, thus blocking the I-kappa-B signaling pathway. As to expression, widely expressed.

The protein resides in the cytoplasm. Its subcellular location is the nucleus. The enzyme catalyses L-seryl-[I-kappa-B protein] + ATP = O-phospho-L-seryl-[I-kappa-B protein] + ADP + H(+). Its activity is regulated as follows. Activated when phosphorylated and inactivated when dephosphorylated. Its function is as follows. Serine kinase that plays an essential role in the NF-kappa-B signaling pathway which is activated by multiple stimuli such as inflammatory cytokines, bacterial or viral products, DNA damages or other cellular stresses. Acts as a part of the canonical IKK complex in the conventional pathway of NF-kappa-B activation and phosphorylates inhibitors of NF-kappa-B on serine residues. These modifications allow polyubiquitination of the inhibitors and subsequent degradation by the proteasome. In turn, free NF-kappa-B is translocated into the nucleus and activates the transcription of hundreds of genes involved in immune response, growth control, or protection against apoptosis. Negatively regulates the pathway by phosphorylating the scaffold protein TAXBP1 and thus promoting the assembly of the A20/TNFAIP3 ubiquitin-editing complex (composed of A20/TNFAIP3, TAX1BP1, and the E3 ligases ITCH and RNF11). Therefore, CHUK plays a key role in the negative feedback of NF-kappa-B canonical signaling to limit inflammatory gene activation. As part of the non-canonical pathway of NF-kappa-B activation, the MAP3K14-activated CHUK/IKKA homodimer phosphorylates NFKB2/p100 associated with RelB, inducing its proteolytic processing to NFKB2/p52 and the formation of NF-kappa-B RelB-p52 complexes. In turn, these complexes regulate genes encoding molecules involved in B-cell survival and lymphoid organogenesis. Also participates in the negative feedback of the non-canonical NF-kappa-B signaling pathway by phosphorylating and destabilizing MAP3K14/NIK. Within the nucleus, phosphorylates CREBBP and consequently increases both its transcriptional and histone acetyltransferase activities. Modulates chromatin accessibility at NF-kappa-B-responsive promoters by phosphorylating histones H3 at 'Ser-10' that are subsequently acetylated at 'Lys-14' by CREBBP. Additionally, phosphorylates the CREBBP-interacting protein NCOA3. Also phosphorylates FOXO3 and may regulate this pro-apoptotic transcription factor. Phosphorylates RIPK1 at 'Ser-25' which represses its kinase activity and consequently prevents TNF-mediated RIPK1-dependent cell death. Phosphorylates AMBRA1 following mitophagy induction, promoting AMBRA1 interaction with ATG8 family proteins and its mitophagic activity. This Homo sapiens (Human) protein is Inhibitor of nuclear factor kappa-B kinase subunit alpha (CHUK).